A 729-amino-acid chain; its full sequence is Polyribonucleotide nucleotidyltransferase (729 aa).

2 residues coordinate Mg(2+): Asp-509 and Asp-515. In terms of domain architecture, KH spans 575-634 (PRVISVKIPVDKIGEVIGPKGKMINQIQADSGAEITVEDDGTIYIGAVDGPSAESARSAI). The S1 motif domain occupies 646-718 (GERYLGTIVK…SRGKISLSPS (73 aa)).

This sequence belongs to the polyribonucleotide nucleotidyltransferase family. Mg(2+) serves as cofactor.

Its subcellular location is the cytoplasm. It carries out the reaction RNA(n+1) + phosphate = RNA(n) + a ribonucleoside 5'-diphosphate. Involved in mRNA degradation. Catalyzes the phosphorolysis of single-stranded polyribonucleotides processively in the 3'- to 5'-direction. The polypeptide is Polyribonucleotide nucleotidyltransferase (Frankia casuarinae (strain DSM 45818 / CECT 9043 / HFP020203 / CcI3)).